The following is a 177-amino-acid chain: ATP synthase subunit delta (177 aa).

It belongs to the ATPase delta chain family. As to quaternary structure, F-type ATPases have 2 components, F(1) - the catalytic core - and F(0) - the membrane proton channel. F(1) has five subunits: alpha(3), beta(3), gamma(1), delta(1), epsilon(1). F(0) has three main subunits: a(1), b(2) and c(10-14). The alpha and beta chains form an alternating ring which encloses part of the gamma chain. F(1) is attached to F(0) by a central stalk formed by the gamma and epsilon chains, while a peripheral stalk is formed by the delta and b chains.

Its subcellular location is the cell inner membrane. F(1)F(0) ATP synthase produces ATP from ADP in the presence of a proton or sodium gradient. F-type ATPases consist of two structural domains, F(1) containing the extramembraneous catalytic core and F(0) containing the membrane proton channel, linked together by a central stalk and a peripheral stalk. During catalysis, ATP synthesis in the catalytic domain of F(1) is coupled via a rotary mechanism of the central stalk subunits to proton translocation. Functionally, this protein is part of the stalk that links CF(0) to CF(1). It either transmits conformational changes from CF(0) to CF(1) or is implicated in proton conduction. This Pasteurella multocida (strain Pm70) protein is ATP synthase subunit delta.